The primary structure comprises 309 residues: Aromatic prenyltransferase (309 aa).

The protein belongs to the aromatic prenyltransferase family.

Functionally, prenyltransferase that attaches isoprenoid moieties to carbon atoms of aromatic substrates in an enzyme-catalyzed Friedel-Crafts reaction. Shows specificity for dimethylallyl diphosphate (DMAPP) and does not accept geranyl diphosphate (GPP) or isopentenyl diphosphate (IPP). Prenylates the artificial substrate 2,7-dihydroxynaphthalene (2,7-DHN), as well as dihydrophenazine-1-carboxylic acid and 4-hydroxybenzoic acid at lower levels. Only traces of products are detected with aspulvinone E or flaviolin as substrates; and no product is formed with L-tryptophan, L-tyrosine, or 4-hydroxyphenylpyruvate. Ptf seems no to be involved in the prenylation reaction in the biosynthesis of aspulvinone H and J and the physiological function of ptf remains unknown. This is Aromatic prenyltransferase from Sclerotinia sclerotiorum (strain ATCC 18683 / 1980 / Ss-1) (White mold).